The sequence spans 212 residues: Methylthioribulose-1-phosphate dehydratase (212 aa).

Residues histidine 97 and histidine 99 each coordinate Zn(2+).

It belongs to the aldolase class II family. MtnB subfamily. Homotetramer. The cofactor is Zn(2+).

It catalyses the reaction 5-(methylsulfanyl)-D-ribulose 1-phosphate = 5-methylsulfanyl-2,3-dioxopentyl phosphate + H2O. Its pathway is amino-acid biosynthesis; L-methionine biosynthesis via salvage pathway; L-methionine from S-methyl-5-thio-alpha-D-ribose 1-phosphate: step 2/6. Its function is as follows. Catalyzes the dehydration of methylthioribulose-1-phosphate (MTRu-1-P) into 2,3-diketo-5-methylthiopentyl-1-phosphate (DK-MTP-1-P). In Bacillus cereus (strain G9842), this protein is Methylthioribulose-1-phosphate dehydratase.